The chain runs to 114 residues: Large ribosomal subunit protein bL20 (114 aa).

This sequence belongs to the bacterial ribosomal protein bL20 family.

Functionally, binds directly to 23S ribosomal RNA and is necessary for the in vitro assembly process of the 50S ribosomal subunit. It is not involved in the protein synthesizing functions of that subunit. The polypeptide is Large ribosomal subunit protein bL20 (Anaeromyxobacter dehalogenans (strain 2CP-1 / ATCC BAA-258)).